The primary structure comprises 121 residues: Putative viral protein-binding protein C1 (121 aa).

Residues 21-57 (PWDRTRGHPDVPWRNLTSSPTRPLAQPAGSCMPAEPS) form a disordered region.

As to quaternary structure, interacts with core protein of hepatitis B virus.

The polypeptide is Putative viral protein-binding protein C1 (Homo sapiens (Human)).